We begin with the raw amino-acid sequence, 289 residues long: 4-diphosphocytidyl-2-C-methyl-D-erythritol kinase (289 aa).

K11 is an active-site residue. ATP is bound at residue 93–103 (PLAAGLAGGSA). D135 is a catalytic residue.

The protein belongs to the GHMP kinase family. IspE subfamily.

The catalysed reaction is 4-CDP-2-C-methyl-D-erythritol + ATP = 4-CDP-2-C-methyl-D-erythritol 2-phosphate + ADP + H(+). It participates in isoprenoid biosynthesis; isopentenyl diphosphate biosynthesis via DXP pathway; isopentenyl diphosphate from 1-deoxy-D-xylulose 5-phosphate: step 3/6. Functionally, catalyzes the phosphorylation of the position 2 hydroxy group of 4-diphosphocytidyl-2C-methyl-D-erythritol. The polypeptide is 4-diphosphocytidyl-2-C-methyl-D-erythritol kinase (Thermoanaerobacter sp. (strain X514)).